A 492-amino-acid polypeptide reads, in one-letter code: NADH-quinone oxidoreductase subunit N (492 aa).

A run of 14 helical transmembrane segments spans residues 13-33 (MLPV…GFWL), 43-63 (ILFV…APWA), 82-102 (AALL…LVSL), 110-132 (VSFA…IAFS), 136-155 (IVML…LATL), 169-189 (FLLG…LYGA), 210-230 (IGIL…KIAL), 245-265 (PTLV…AGML), 272-292 (LAAG…TLVI), 306-326 (LLAY…LGDT), 331-351 (AALG…LAVV), 377-397 (AVAL…AGFF), 410-430 (GYLL…VYYL), and 457-477 (VAVA…NLWY).

The protein belongs to the complex I subunit 2 family. As to quaternary structure, NDH-1 is composed of 15 different subunits. Subunits NuoA, H, J, K, L, M, N constitute the membrane sector of the complex.

Its subcellular location is the cell membrane. The catalysed reaction is a quinone + NADH + 5 H(+)(in) = a quinol + NAD(+) + 4 H(+)(out). In terms of biological role, NDH-1 shuttles electrons from NADH, via FMN and iron-sulfur (Fe-S) centers, to quinones in the respiratory chain. The immediate electron acceptor for the enzyme in this species is believed to be a menaquinone. Couples the redox reaction to proton translocation (for every two electrons transferred, four hydrogen ions are translocated across the cytoplasmic membrane), and thus conserves the redox energy in a proton gradient. This is NADH-quinone oxidoreductase subunit N from Deinococcus radiodurans (strain ATCC 13939 / DSM 20539 / JCM 16871 / CCUG 27074 / LMG 4051 / NBRC 15346 / NCIMB 9279 / VKM B-1422 / R1).